The following is a 530-amino-acid chain: Cation transporter HKT2;2 (530 aa).

Residues 1-40 (MTSIYQEFIHTKCQSFRSIGRYVLHSIVLIYRFVSLHVHP) are Cytoplasmic-facing. 2 consecutive transmembrane segments (helical) span residues 41 to 61 (FWIQLSYFLLISILGSVLLMF) and 102 to 122 (IVVLTLLMLVGGEVFVSFLGL). Over 123-186 (MLRLKHKHNP…DLKRSKRLRW (64 aa)) the chain is Cytoplasmic. Helical transmembrane passes span 187 to 207 (FLGFVVFSYFVVIHVVGFLLV) and 260 to 280 (GLLLLFIGQILAGNTLYPLFL). The Cytoplasmic segment spans residues 281-317 (RILIWFLGKVTKLKDLKLMIKNSDELQYDYLLPKLPT). 2 helical membrane-spanning segments follow: residues 318 to 338 (AFLASTVIGLMASLVTLFGSV) and 372 to 392 (IDCSLIAPAVLVLFIILMYLP). The Cytoplasmic portion of the chain corresponds to 393 to 420 (PSTTFALSNGDEKTANKKAKRKLGLVVR). Helical transmembrane passes span 421-441 (NLAFSQLACNAVFVIVALITE) and 494-514 (SLSGWWSDEGKLLLVSVMLYG). Over 515 to 530 (RLKAFTKGTGEYWRLW) the chain is Cytoplasmic.

This sequence belongs to the TrkH potassium transport family. HKT (TC 2.A.38.3) subfamily.

It localises to the membrane. In terms of biological role, seems to be involved in regulation of potassium-sodium homeostasis. Seems to act as a potassium-sodium cotransporter, which mediates increased potassium uptake under external sodium accumulation and contributes to salt-tolerance in cultivar indica Pokkali. In Oryza sativa subsp. indica (Rice), this protein is Cation transporter HKT2;2.